Consider the following 1004-residue polypeptide: uncharacterized protein (1004 aa).

N-linked (GlcNAc...) asparagine glycosylation occurs at N27. The next 4 membrane-spanning stretches (helical) occupy residues 38-58, 77-97, 188-208, and 324-344; these read FGFS…LLAI, IVPD…LIVI, LSPV…LIAY, and FILM…SLFS. N392, N418, and N421 each carry an N-linked (GlcNAc...) asparagine glycan. 2 consecutive transmembrane segments (helical) span residues 422–442 and 599–619; these read MSLS…VIAF and MSNI…IIDM. Residue N627 is glycosylated (N-linked (GlcNAc...) asparagine). 2 consecutive transmembrane segments (helical) span residues 726 to 746 and 823 to 843; these read GYPL…ISVF and GDYI…VLGS. N859 is a glycosylation site (N-linked (GlcNAc...) asparagine).

This sequence to yeast YPR031w.

The protein localises to the membrane. This is an uncharacterized protein from Schizosaccharomyces pombe (strain 972 / ATCC 24843) (Fission yeast).